The chain runs to 617 residues: Estrogen receptor (617 aa).

Residues 1-54 (MSEEQARAEAPAGARQRRRSELEGYSVSLASLKLSPMYPEEEQRTTGGISSTAH) form a disordered region. The interval 1–186 (MSEEQARAEA…AIGLVKEIRY (186 aa)) is modulating. 2 NR C4-type zinc fingers span residues 187–207 (CSVC…CEGC) and 223–247 (CPAT…LRKC). A DNA-binding region (nuclear receptor) is located at residues 187–252 (CSVCSDYASG…RLRKCYEVGM (66 aa)). Residues 253-315 (MKGGFRKERG…GGGVADVVCM (63 aa)) form a hinge region. The tract at residues 269–303 (NRRPSGLKERERGYSKAQSGSDVREALPQDGQSSS) is disordered. The 237-residue stretch at 316 to 552 (SPEQVLLLLL…DLLLEMLDAH (237 aa)) folds into the NR LBD domain. The tract at residues 568–617 (VSSSPTTTATTPTTNTTTTTTTTTHHPSNGSTCPADLPSNPPGPGQSPSP) is disordered. Residues 573-591 (TTTATTPTTNTTTTTTTTT) show a composition bias toward low complexity. Positions 606-617 (SNPPGPGQSPSP) are enriched in pro residues.

This sequence belongs to the nuclear hormone receptor family. NR3 subfamily. Binds DNA as a homodimer. Can form a heterodimer with ER-beta. As to expression, ovary and testis.

The protein resides in the nucleus. In terms of biological role, the steroid hormones and their receptors are involved in the regulation of eukaryotic gene expression and affect cellular proliferation and differentiation in target tissues. The polypeptide is Estrogen receptor (esr1) (Ictalurus punctatus (Channel catfish)).